The chain runs to 272 residues: R-spondin-3 (272 aa).

Positions 1 to 21 (MHLRLISWLFIILNFMEYIGS) are cleaved as a signal peptide. 2 FU repeats span residues 35–86 (PNVS…GYYG) and 92–135 (INKC…GLEA). N-linked (GlcNAc...) asparagine glycosylation is present at Asn-36. Intrachain disulfides connect Cys-41/Cys-48, Cys-45/Cys-54, Cys-57/Cys-76, Cys-80/Cys-95, Cys-98/Cys-105, Cys-102/Cys-111, Cys-114/Cys-125, Cys-129/Cys-142, Cys-148/Cys-190, Cys-159/Cys-166, and Cys-199/Cys-206. Positions 147–207 (HCEVSEWNPW…KCTVQRKKCQ (61 aa)) constitute a TSP type-1 domain. Residues 201 to 272 (VQRKKCQKGE…QKSVSVSTVH (72 aa)) are disordered. Positions 213 to 223 (KKGRERKRKKP) are enriched in basic residues. The segment covering 224–252 (NKGESKEAIPDSKSLESSKEIPEQRENKQ) has biased composition (basic and acidic residues).

This sequence belongs to the R-spondin family. As to quaternary structure, interacts with the extracellular domain of FZD8 and LRP6. It however does not form a ternary complex with FZD8 and LRP6. Interacts with WNT1. Binds heparin. Interacts with LGR4, LGR5 and LGR6. In terms of tissue distribution, ubiquitously expressed. Expressed at higher level in placenta, small intestine, fetal thymus and lymph node. Highly expressed in endothelial cells.

The protein localises to the secreted. Activator of the canonical Wnt signaling pathway by acting as a ligand for LGR4-6 receptors, which acts as a key regulator of angiogenesis. Upon binding to LGR4-6 (LGR4, LGR5 or LGR6), LGR4-6 associate with phosphorylated LRP6 and frizzled receptors that are activated by extracellular Wnt receptors, triggering the canonical Wnt signaling pathway to increase expression of target genes. Also regulates the canonical Wnt/beta-catenin-dependent pathway and non-canonical Wnt signaling by acting as an inhibitor of ZNRF3, an important regulator of the Wnt signaling pathway. Acts as a ligand for frizzled FZD8 and LRP6. May negatively regulate the TGF-beta pathway. Acts as a key regulator of angiogenesis by controlling vascular stability and pruning: acts by activating the non-canonical Wnt signaling pathway in endothelial cells. Can also amplify Wnt signaling pathway independently of LGR4-6 receptors, possibly by acting as a direct antagonistic ligand to RNF43 and ZNRF3. In Homo sapiens (Human), this protein is R-spondin-3 (RSPO3).